The chain runs to 80 residues: Small pacifastin protease inhibitor (80 aa).

The signal sequence occupies residues 1-24; that stretch reads MSKVLKVGLLLLLVAVAASAYAVA. Residues 25-47 constitute a propeptide that is removed on maturation; sequence EENGAPKENKQLPQIDDYGVTNK. The 36-residue stretch at 45–80 folds into the Pacifastin domain; sequence TNKCPANQPFKWNCNYCTCGPEGKDASCTRMACPQH. Intrachain disulfides connect Cys48-Cys63, Cys58-Cys77, and Cys61-Cys72.

Belongs to the protease inhibitor I19 family. As to expression, expressed in the venom apparatus. Low transcript levels are also detected in other tissues.

The protein resides in the secreted. Its function is as follows. Parasitic wasp protein that may interfere with the host immune response. The recombinant protein inhibits trypsin activity and prophenoloxidase (PPO) activation, an enzyme essential for both clotting and insect innate immune responses. It does not inhibit activity of chymotrypsin and protease K, and has no effect on phenoloxidase (PO) activity. The polypeptide is Small pacifastin protease inhibitor (Nasonia vitripennis (Parasitic wasp)).